A 707-amino-acid polypeptide reads, in one-letter code: Ribosomal RNA large subunit methyltransferase K/L (707 aa).

A THUMP domain is found at 44–155; the sequence is VIYNLCLWSR…NDILTVSFDL (112 aa).

This sequence belongs to the methyltransferase superfamily. RlmKL family.

The protein localises to the cytoplasm. It catalyses the reaction guanosine(2445) in 23S rRNA + S-adenosyl-L-methionine = N(2)-methylguanosine(2445) in 23S rRNA + S-adenosyl-L-homocysteine + H(+). It carries out the reaction guanosine(2069) in 23S rRNA + S-adenosyl-L-methionine = N(2)-methylguanosine(2069) in 23S rRNA + S-adenosyl-L-homocysteine + H(+). In terms of biological role, specifically methylates the guanine in position 2445 (m2G2445) and the guanine in position 2069 (m7G2069) of 23S rRNA. This chain is Ribosomal RNA large subunit methyltransferase K/L, found in Legionella pneumophila subsp. pneumophila (strain Philadelphia 1 / ATCC 33152 / DSM 7513).